The following is a 151-amino-acid chain: S-ribosylhomocysteine lyase (151 aa).

Fe cation contacts are provided by His-54, His-58, and Cys-121.

This sequence belongs to the LuxS family. As to quaternary structure, homodimer. It depends on Fe cation as a cofactor.

The enzyme catalyses S-(5-deoxy-D-ribos-5-yl)-L-homocysteine = (S)-4,5-dihydroxypentane-2,3-dione + L-homocysteine. Involved in the synthesis of autoinducer 2 (AI-2) which is secreted by bacteria and is used to communicate both the cell density and the metabolic potential of the environment. The regulation of gene expression in response to changes in cell density is called quorum sensing. Catalyzes the transformation of S-ribosylhomocysteine (RHC) to homocysteine (HC) and 4,5-dihydroxy-2,3-pentadione (DPD). The sequence is that of S-ribosylhomocysteine lyase from Clostridium perfringens (strain ATCC 13124 / DSM 756 / JCM 1290 / NCIMB 6125 / NCTC 8237 / Type A).